The following is a 428-amino-acid chain: Sporulation kinase C (428 aa).

Transmembrane regions (helical) follow at residues 8–28 and 36–56; these read IISI…FYFI and PVDI…AYYI. The PAS domain occupies 76 to 147; sequence LSEEKNRIMD…NTQIQNKASS (72 aa). Positions 148 to 200 constitute a PAC domain; the sequence is GMFTAKYVTKNGTIFWGEVHYKLYYDRDDQFTGSLGTMSDITERKEAEDELIE. The region spanning 221 to 426 is the Histidine kinase domain; it reads GIAHEVRNPL…VFQVVLPLKS (206 aa). Position 224 is a phosphohistidine; by autocatalysis (histidine 224).

In terms of assembly, oligomerizes, probably forms homodimers; oligomerization is assisted by FloT. Interacts with FloT. Another study shows only rare colocalization with FloT or FloA membrane assemblies. KinC membrane assemblies are more mobile than FloT membrane assemblies.

The protein localises to the cell membrane. The protein resides in the membrane raft. The catalysed reaction is ATP + protein L-histidine = ADP + protein N-phospho-L-histidine.. Its function is as follows. Phosphorylates the sporulation-regulatory protein Spo0A a transcription factor that also controls biofilm formation. Requires FloT and FloA for localization to DRMs and for activity. This Bacillus subtilis (strain 168) protein is Sporulation kinase C.